Here is a 288-residue protein sequence, read N- to C-terminus: Bifunctional protein FolD (288 aa).

NADP(+) contacts are provided by residues 164–166 (GRS), Ser-193, and Ile-234.

The protein belongs to the tetrahydrofolate dehydrogenase/cyclohydrolase family. In terms of assembly, homodimer.

It carries out the reaction (6R)-5,10-methylene-5,6,7,8-tetrahydrofolate + NADP(+) = (6R)-5,10-methenyltetrahydrofolate + NADPH. It catalyses the reaction (6R)-5,10-methenyltetrahydrofolate + H2O = (6R)-10-formyltetrahydrofolate + H(+). The protein operates within one-carbon metabolism; tetrahydrofolate interconversion. Catalyzes the oxidation of 5,10-methylenetetrahydrofolate to 5,10-methenyltetrahydrofolate and then the hydrolysis of 5,10-methenyltetrahydrofolate to 10-formyltetrahydrofolate. In Nitratidesulfovibrio vulgaris (strain DSM 19637 / Miyazaki F) (Desulfovibrio vulgaris), this protein is Bifunctional protein FolD.